Consider the following 280-residue polypeptide: Negative elongation factor E (280 aa).

Over residues 25-36 (KKKKKALQAHKA) the composition is skewed to basic residues. Disordered regions lie at residues 25–112 (KKKK…STQN) and 141–166 (RDREERGMPEKVPMDTAQPEKPRAGN). Residues 49-61 (RPTDARDAREVAR) show a composition bias toward basic and acidic residues. Residues 73–83 (QKQTKQDQTSF) show a composition bias toward polar residues. Residues 87–96 (KGQERAKRST) show a composition bias toward basic and acidic residues. The segment covering 97–112 (SETTVASYQPFSSTQN) has biased composition (polar residues). Basic and acidic residues predominate over residues 141–163 (RDREERGMPEKVPMDTAQPEKPR). The RRM domain maps to 166-236 (NTIFVSGNKV…INLQVQLARR (71 aa)).

The protein belongs to the RRM NELF-E family. As to quaternary structure, component of the NELF complex, which is at least composed of TH1/Nelf-D and Nelf-E.

The protein resides in the nucleus. Its subcellular location is the chromosome. Essential component of the NELF complex, a complex that negatively regulates the elongation of transcription by RNA polymerase II by RNA polymerase II. The NELF complex, which acts via an association with the DSIF complex, causes transcriptional pausing. The protein is Negative elongation factor E (Nelf-E) of Drosophila melanogaster (Fruit fly).